A 144-amino-acid polypeptide reads, in one-letter code: UPF0102 protein BMA2801 (144 aa).

The disordered stretch occupies residues 1 to 28; that stretch reads MCHAREASPGTGEPEAAPRDNFPRAAGS.

The protein belongs to the UPF0102 family.

The protein is UPF0102 protein BMA2801 of Burkholderia mallei (strain ATCC 23344).